Reading from the N-terminus, the 314-residue chain is Oxidoreductase poxI (314 aa).

This sequence belongs to the NmrA-type oxidoreductase family. Isoflavone reductase subfamily.

Its pathway is secondary metabolite biosynthesis. Functionally, oxidoreductase; part of the gene cluster that mediates the biosynthesis of oxaleimides, cytotoxic compounds containing an unusual disubstituted succinimide moiety. The first step of the pathway is provided by the HR-PKS poxF that serves in a new mode of collaborative biosynthesis with the PKS-NRPS poxE, by providing the olefin containing amino acid substrate via the synthesis of an ACP-bound dec-4-enoate. The cytochrome P450 monooxygenase poxM-catalyzed oxidation at the alpha-position creates the enzyme-bound 2-hydroxydec-4-enoyl-ACP thioester, which may be prone to spontaneous hydrolysis to yield 2-hydroxydec-4-enoic acid due to increased electrophilicity of the carbonyl. 2-hydroxydec-4-enoic acid can then be further oxidized by poxM to yield the alpha-ketoacid 2-oxodec-4-enoicacid, which is reductively aminated by the aminotransferase poxL to yield (S,E)-2-aminodec-4-enoic acid. The Hybrid PKS-NRPS synthetase poxE then performs condensation between the octaketide product of its PKS modules and the amino group of (S,E)-2-aminodec-4-enoic acid which is activated and incorporated by the adenylation domain. The resulting aminoacyl product can be cyclized by the Diels-Alderase PoxQ and reductively released by the reductive (R) domain of poxE to yield an aldehyde intermediate. The released aldehyde is then substrate for a Knoevenagel condensation by the hydrolyase poxO followed by an oxidation at the 5-position of the pyrrolidone ring. The presence of the olefin from the amino acid building block allows for migration of the substituted allyl group to occur. This allylic transposition reaction takes place in a conjugate addition, semipinacol-like fashion to yield a succinimide intermediate. Iterative two-electron oxidations of the C7 methyl of the succinimide intermediate to the carboxylic acid can be catalyzed by one of two remaining cytochrome P450 monooxygenasess poxC or poxD to yield oxaleimide A. Subsequent oxidation yields the maleimide scaffold oxaleimide I. Both oxaleimide A and oxaleimide I can undergo oxidative modifications in the decalin ring to yield the series of products oxaleimides B to H. In Penicillium oxalicum (strain 114-2 / CGMCC 5302) (Penicillium decumbens), this protein is Oxidoreductase poxI.